The chain runs to 239 residues: Uridylate kinase (239 aa).

ATP is bound at residue 10-13; the sequence is KFSG. The segment at 18 to 23 is involved in allosteric activation by GTP; that stretch reads GENGFG. UMP is bound at residue Gly-52. ATP-binding residues include Gly-53 and Arg-57. UMP-binding positions include Asp-73 and 134–141; that span reads TGNPYFTT. ATP is bound by residues Thr-161, Tyr-167, and Asp-170.

The protein belongs to the UMP kinase family. Homohexamer.

It localises to the cytoplasm. It carries out the reaction UMP + ATP = UDP + ADP. It participates in pyrimidine metabolism; CTP biosynthesis via de novo pathway; UDP from UMP (UMPK route): step 1/1. With respect to regulation, allosterically activated by GTP. Inhibited by UTP. Functionally, catalyzes the reversible phosphorylation of UMP to UDP. The sequence is that of Uridylate kinase from Campylobacter jejuni subsp. jejuni serotype O:6 (strain 81116 / NCTC 11828).